Consider the following 299-residue polypeptide: uncharacterized protein (299 aa).

The interval 1–20 (MTTKHELVINTNEPSAPNAD) is disordered. The helical transmembrane segment at 172-192 (SFFIPPMVVISTPICLGLTVF) threads the bilayer.

It belongs to the IIV-6 259R family.

Its subcellular location is the membrane. This is an uncharacterized protein from Acheta domesticus (House cricket).